A 203-amino-acid chain; its full sequence is MAESFKEHLQEAFEDLGADNLRKFKSKLGDRRQEPRVTKSAIEKLKDEIDLADLMVGVFTSKDAVSVTVEILRAIKCNAVADDLLRNTGQSESKGALSDESKCASSKAVSKVAFSKVNFIDEHWKELIDRVNNVDPILDILRQKKVITNEDYCTIRNKETPQKKMRELLTGPITCAGNKGKEVLYDALRESNKFLMDDLEDAE.

Residues Met1–Ser91 form the Pyrin domain. Residues Val112–Glu203 form the CARD domain.

In terms of assembly, self-associates (via pyrin and CARD domains). Interacts (via pyrin domain) with caspa (via pyrin domain). Interacts with caspb; the interaction only occurs in the presence of nlrp1. Component of NLRP1 inflammasomes. Inflammasomes are supramolecular complexes that assemble in the cytosol in response to pathogens and other damage-associated signals and play critical roles in innate immunity and inflammation. The NLRP1 inflammasome is composed of the signal sensor nlrp1, and the adapter pycard (asc), which recruit effector pro-inflammatory caspases caspa and/or caspb. The interaction between nlrp1 and pycard is required for the sequential recruitment of caspa and then caspb. Within the complex caspa is preferentially recruited first and this causes the cleavage of pro-il1b into the midformed il1b. This is followed by the recruitment of caspb, which is activated and cleaves the midformed il1b resulting in il1b maturation. Interacts (via pyrin domain) with NLP3X1 (via pyrin domain). Interacts with gbp4. As to expression, expressed in the kidney, intestine and gill. Expressed at low levels in the heart.

It localises to the cytoplasm. It is found in the inflammasome. In terms of biological role, functions as a key mediator in apoptosis and inflammation. Promotes caspase-mediated apoptosis. Induces proteolytic processing of caspa and caspa-dependent apoptosis. Involved in innate immune response by acting as an integral adapter in the assembly of various inflammasomes which recruit and activate caspase-1 leading to processing and secretion of pro-inflammatory cytokines. Caspase-1-dependent inflammation leads to macrophage pyroptosis, a form of cell death. The function as activating adapter in different types of inflammasomes is mediated by the pyrin and CARD domains and their homotypic interactions. Clustered PYCARD nucleates the formation of caspase-1 filaments through the interaction of their respective CARD domains, acting as a platform for of caspase-1 polymerization. Also involved in transcriptional activation of cytokines and chemokines independent of the inflammasome. This Danio rerio (Zebrafish) protein is Apoptosis-associated speck-like protein containing a CARD (pycard).